The following is a 183-amino-acid chain: Large ribosomal subunit protein uL6 (183 aa).

The protein belongs to the universal ribosomal protein uL6 family. As to quaternary structure, part of the 50S ribosomal subunit.

Functionally, this protein binds to the 23S rRNA, and is important in its secondary structure. It is located near the subunit interface in the base of the L7/L12 stalk, and near the tRNA binding site of the peptidyltransferase center. The chain is Large ribosomal subunit protein uL6 from Porphyromonas gingivalis (strain ATCC 33277 / DSM 20709 / CIP 103683 / JCM 12257 / NCTC 11834 / 2561).